A 630-amino-acid polypeptide reads, in one-letter code: Differentially expressed in FDCP 6 (630 aa).

A Phosphotyrosine modification is found at Y210. The 97-residue stretch at 216–312 folds into the PH domain; that stretch reads DVLKQGYLWK…WTAAIQTAIR (97 aa). K225 carries the N6-acetyllysine modification. Disordered stretches follow at residues 318–341, 378–418, and 552–630; these read KTSL…RRRA, LQEE…ELKK, and HPIE…APGN. 2 stretches are compositionally biased toward basic and acidic residues: residues 331–341 and 378–392; these read EQREQRERRRA and LQEE…HKEL. Residues 588-606 are compositionally biased toward polar residues; the sequence is WGSQGNRTLSVNSSEQKSL. S590 carries the post-translational modification Phosphoserine. The segment covering 620 to 630 has biased composition (basic and acidic residues); sequence QEEKLDPAPGN.

Interacts with IRF4, activated RAC1 and F-actin. Both the phosphorylated and non-phosphorylated forms bind phosphatidylinositol 3,4,5-trisphosphate (PtdInsP3). Interacts with ZAP70. Interacts with RAB11A. Tyrosine-phosphorylated by tyrosine-protein kinase LCK in response to T-cell activation. Thymus.

The protein resides in the cytoplasm. It localises to the cell membrane. It is found in the nucleus. Its subcellular location is the cytoskeleton. The protein localises to the perinuclear region. The protein resides in the cell projection. It localises to the filopodium. In terms of biological role, phosphatidylinositol 3,4,5-trisphosphate-dependent guanine nucleotide exchange factor (GEF) which plays a role in the activation of Rho GTPases RAC1, RhoA and CDC42. Can regulate cell morphology in cooperation with activated RAC1. Involved in immune homeostasis by ensuring proper trafficking and availability of T-cell regulator CTLA-4 at T-cell surface. Plays a role in Th2 (T helper cells) development and/or activation, perhaps by interfering with ZAP70 signaling. Required for optimal T-cell effector function, lymphocyte homeostasis and the prevention of systemic autoimmunity. The chain is Differentially expressed in FDCP 6 (Def6) from Mus musculus (Mouse).